The primary structure comprises 548 residues: Eukaryotic translation initiation factor 3 subunit D (548 aa).

N6-acetyllysine is present on K53. S161 is modified (phosphoserine). Positions 285 to 299 are RNA gate; that stretch reads DFDLLTVSETANEPP. The segment at 523–548 is disordered; that stretch reads PDGTFSSDEDEEEEEEEEEEEEEEET. A phosphoserine mark is found at S528 and S529. Residues 529-548 are compositionally biased toward acidic residues; that stretch reads SDEDEEEEEEEEEEEEEEET.

It belongs to the eIF-3 subunit D family. Component of the eukaryotic translation initiation factor 3 (eIF-3) complex, which is composed of 13 subunits: EIF3A, EIF3B, EIF3C, EIF3D, EIF3E, EIF3F, EIF3G, EIF3H, EIF3I, EIF3J, EIF3K, EIF3L and EIF3M. The eIF-3 complex appears to include 3 stable modules: module A is composed of EIF3A, EIF3B, EIF3G and EIF3I; module B is composed of EIF3F, EIF3H, and EIF3M; and module C is composed of EIF3C, EIF3D, EIF3E, EIF3K and EIF3L. EIF3C of module C binds EIF3B of module A and EIF3H of module B, thereby linking the three modules. EIF3J is a labile subunit that binds to the eIF-3 complex via EIF3B. The eIF-3 complex interacts with RPS6KB1 under conditions of nutrient depletion. Mitogenic stimulation leads to binding and activation of a complex composed of MTOR and RPTOR, leading to phosphorylation and release of RPS6KB1 and binding of EIF4B to eIF-3. As to quaternary structure, (Microbial infection) Interacts with Norwalk virus VPg protein.

The protein resides in the cytoplasm. Functionally, mRNA cap-binding component of the eukaryotic translation initiation factor 3 (eIF-3) complex, a complex required for several steps in the initiation of protein synthesis of a specialized repertoire of mRNAs. The eIF-3 complex associates with the 40S ribosome and facilitates the recruitment of eIF-1, eIF-1A, eIF-2:GTP:methionyl-tRNAi and eIF-5 to form the 43S pre-initiation complex (43S PIC). The eIF-3 complex stimulates mRNA recruitment to the 43S PIC and scanning of the mRNA for AUG recognition. The eIF-3 complex is also required for disassembly and recycling of post-termination ribosomal complexes and subsequently prevents premature joining of the 40S and 60S ribosomal subunits prior to initiation. The eIF-3 complex specifically targets and initiates translation of a subset of mRNAs involved in cell proliferation, including cell cycling, differentiation and apoptosis, and uses different modes of RNA stem-loop binding to exert either translational activation or repression. In the eIF-3 complex, EIF3D specifically recognizes and binds the 7-methylguanosine cap of a subset of mRNAs. (Microbial infection) In case of FCV infection, plays a role in the ribosomal termination-reinitiation event leading to the translation of VP2. In Homo sapiens (Human), this protein is Eukaryotic translation initiation factor 3 subunit D.